A 282-amino-acid chain; its full sequence is uncharacterized protein (282 aa).

One can recognise an HTH rpiR-type domain in the interval 2-78 (TDVLAVIREM…IKIAVSLAKQ (77 aa)). The H-T-H motif DNA-binding region spans 38–57 (VNELANACDTSEASIIRFCR). An SIS domain is found at 122–262 (AAEALANANK…FILVAQKKYN (141 aa)).

This is an uncharacterized protein from Caldanaerobacter subterraneus subsp. tengcongensis (strain DSM 15242 / JCM 11007 / NBRC 100824 / MB4) (Thermoanaerobacter tengcongensis).